An 820-amino-acid chain; its full sequence is Leucine--tRNA ligase (820 aa).

The short motif at 42–52 is the 'HIGH' region element; that stretch reads PYPSGDLHMGH. Positions 576-580 match the 'KMSKS' region motif; it reads KMSKS. Lys579 is a binding site for ATP.

It belongs to the class-I aminoacyl-tRNA synthetase family.

Its subcellular location is the cytoplasm. The catalysed reaction is tRNA(Leu) + L-leucine + ATP = L-leucyl-tRNA(Leu) + AMP + diphosphate. The chain is Leucine--tRNA ligase from Coxiella burnetii (strain Dugway 5J108-111).